Consider the following 689-residue polypeptide: Glycine--tRNA ligase beta subunit (689 aa).

Belongs to the class-II aminoacyl-tRNA synthetase family. In terms of assembly, tetramer of two alpha and two beta subunits.

The protein resides in the cytoplasm. The catalysed reaction is tRNA(Gly) + glycine + ATP = glycyl-tRNA(Gly) + AMP + diphosphate. The sequence is that of Glycine--tRNA ligase beta subunit from Aeromonas salmonicida (strain A449).